The chain runs to 269 residues: Growth-regulating factor 11 (269 aa).

The segment covering 1–11 (MAAEGEAKKDS) has biased composition (basic and acidic residues). The tract at residues 1-71 (MAAEGEAKKD…GKEDVEEGGV (71 aa)) is disordered. The span at 43–52 (GEAGGGGGGG) shows a compositional bias: gly residues. Residues 58 to 68 (EEEEGKEDVEE) show a composition bias toward acidic residues. In terms of domain architecture, QLQ spans 114 to 149 (AFTAMQLQELEQQSRVYQYMAARVPVPTHLVFPIWK). Residues 180 to 224 (EPEPGRCRRTDGKKWRCWRNAIANEKYCERHMHRGRKRPVQLVVE) enclose the WRC domain. 2 consecutive short sequence motifs (bipartite nuclear localization signal) follow at residues 185-195 (RCRRTDGKKWR) and 213-217 (RGRKR). Positions 212–269 (HRGRKRPVQLVVEDDEPDSTSGSKPASGKATEGGKKTDDKSSSSKKLAVAAPAAVEST) are disordered. The span at 243-253 (EGGKKTDDKSS) shows a compositional bias: basic and acidic residues. Low complexity predominate over residues 255–269 (SKKLAVAAPAAVEST).

It belongs to the GRF family.

The protein resides in the nucleus. In terms of biological role, transcription activator that plays a regulatory role in gibberellin-induced stem elongation. This chain is Growth-regulating factor 11 (GRF11), found in Oryza sativa subsp. japonica (Rice).